The sequence spans 452 residues: DNA primase DnaG (452 aa).

One can recognise a Toprim domain in the interval 172 to 248; the sequence is DTVIIVEGRA…DIDYIARAPP (77 aa). Mg(2+) contacts are provided by E178, D222, and D224. A disordered region spans residues 289-320; the sequence is KKQIEQAQVQPSAAPTSPQPQPESTQPTQPIQ. Over residues 294–320 the composition is skewed to low complexity; sequence QAQVQPSAAPTSPQPQPESTQPTQPIQ.

The protein belongs to the archaeal DnaG primase family. As to quaternary structure, forms a ternary complex with MCM helicase and DNA. Component of the archaeal exosome complex. Mg(2+) serves as cofactor.

It carries out the reaction ssDNA + n NTP = ssDNA/pppN(pN)n-1 hybrid + (n-1) diphosphate.. Its function is as follows. RNA polymerase that catalyzes the synthesis of short RNA molecules used as primers for DNA polymerase during DNA replication. Also part of the exosome, which is a complex involved in RNA degradation. Acts as a poly(A)-binding protein that enhances the interaction between heteromeric, adenine-rich transcripts and the exosome. This chain is DNA primase DnaG, found in Caldivirga maquilingensis (strain ATCC 700844 / DSM 13496 / JCM 10307 / IC-167).